The primary structure comprises 164 residues: Ribosome maturation factor RimP (164 aa).

Belongs to the RimP family.

It localises to the cytoplasm. In terms of biological role, required for maturation of 30S ribosomal subunits. The polypeptide is Ribosome maturation factor RimP (Mesoplasma florum (strain ATCC 33453 / NBRC 100688 / NCTC 11704 / L1) (Acholeplasma florum)).